A 184-amino-acid chain; its full sequence is Cyclin-dependent kinase inhibitor 1 (184 aa).

Residues 85 to 98 (ISSTTLTPLSSPST) are compositionally biased toward low complexity. The interval 85 to 184 (ISSTTLTPLS…IRTRSSCSPY (100 aa)) is disordered.

It belongs to the CDI family. As to quaternary structure, interacts with cyd-1; the interaction is direct. In terms of tissue distribution, in embryos, expression is first seen in pharyngeal primordium and later in all differentiating cells. Post embryonic expression corresponds to developmental patterns of cell cycle progression in many tissues including sex myoblasts, distal tip cells, vulval cells, seam cells, neurons, intestine cells and hypodermal cells.

The protein resides in the nucleus. Its function is as follows. Negative cell-cycle regulator that functions at the G1-to-S-phase transition. Required for suspension of the cell cycle in dauer larvae and starved L1 larvae. In vulval precursor cells (VPCs), a pathway of heterochronic genes acts via cki-1 to maintain VPCs in G1 during the L2 larval stage. Cul-2 may function in ubiquitin-mediated degradation by targeting cki-1 for degradation. Involved in distal tip cell development by repressing and modulating cye-1/cdk-2 activity levels in Z1.aa/Z4.pp and in Z1.ap/Z4.pa. The protein is Cyclin-dependent kinase inhibitor 1 of Caenorhabditis elegans.